We begin with the raw amino-acid sequence, 383 residues long: Succinyl-diaminopimelate desuccinylase (383 aa).

A Zn(2+)-binding site is contributed by His-72. Asp-74 is a catalytic residue. Residue Asp-105 coordinates Zn(2+). The Proton acceptor role is filled by Glu-137. Glu-138, Glu-167, and His-352 together coordinate Zn(2+).

The protein belongs to the peptidase M20A family. DapE subfamily. As to quaternary structure, homodimer. The cofactor is Zn(2+). Co(2+) serves as cofactor.

The enzyme catalyses N-succinyl-(2S,6S)-2,6-diaminopimelate + H2O = (2S,6S)-2,6-diaminopimelate + succinate. Its pathway is amino-acid biosynthesis; L-lysine biosynthesis via DAP pathway; LL-2,6-diaminopimelate from (S)-tetrahydrodipicolinate (succinylase route): step 3/3. Catalyzes the hydrolysis of N-succinyl-L,L-diaminopimelic acid (SDAP), forming succinate and LL-2,6-diaminopimelate (DAP), an intermediate involved in the bacterial biosynthesis of lysine and meso-diaminopimelic acid, an essential component of bacterial cell walls. This chain is Succinyl-diaminopimelate desuccinylase, found in Ehrlichia ruminantium (strain Gardel).